The primary structure comprises 50 residues: Peroxiredoxin-6 (50 aa).

The Thioredoxin domain maps to 1-50; the sequence is DFTPVCTTELGRLAPEFAKRVVFIFGPDKKLKLSILYPATTGRNFDEILR. Thr-3 is modified (phosphothreonine). Cys-6 functions as the Cysteine sulfenic acid (-SOH) intermediate; for peroxidase activity in the catalytic mechanism. An N6-acetyllysine modification is found at Lys-19. Asp-28 (for phospholipase activity) is an active-site residue.

This sequence belongs to the peroxiredoxin family. Prx6 subfamily. As to quaternary structure, homodimer. Interacts with GSTP1; mediates PRDX6 glutathionylation and regeneration. Interacts with APEX1. Interacts with STH. May interact with FAM168B. May interact with HTR2A. Post-translationally, irreversibly inactivated by overoxidation of Cys-6 to sulfinic acid (Cys-SO(2)H) and sulfonic acid (Cys-SO(3)H) forms upon oxidative stress. Phosphorylation at Thr-177 by MAP kinases increases the phospholipase activity of the enzyme. The phosphorylated form exhibits a greater lysophosphatidylcholine acyltransferase activity compared to the non-phosphorylated form.

Its subcellular location is the cytoplasm. The protein localises to the lysosome. The catalysed reaction is a hydroperoxide + 2 glutathione = an alcohol + glutathione disulfide + H2O. It catalyses the reaction a 1,2-diacyl-sn-glycero-3-phosphocholine + H2O = a 1-acyl-sn-glycero-3-phosphocholine + a fatty acid + H(+). It carries out the reaction a 1-acyl-sn-glycero-3-phosphocholine + an acyl-CoA = a 1,2-diacyl-sn-glycero-3-phosphocholine + CoA. The enzyme catalyses 1-hexadecanoyl-sn-glycero-3-phosphocholine + hexadecanoyl-CoA = 1,2-dihexadecanoyl-sn-glycero-3-phosphocholine + CoA. The catalysed reaction is 1,2-dihexadecanoyl-sn-glycero-3-phosphocholine + H2O = 1-hexadecanoyl-sn-glycero-3-phosphocholine + hexadecanoate + H(+). Thiol-specific peroxidase that catalyzes the reduction of hydrogen peroxide and organic hydroperoxides to water and alcohols, respectively. Can reduce H(2)O(2) and short chain organic, fatty acid, and phospholipid hydroperoxides. Also has phospholipase activity, and can therefore either reduce the oxidized sn-2 fatty acyl group of phospholipids (peroxidase activity) or hydrolyze the sn-2 ester bond of phospholipids (phospholipase activity). These activities are dependent on binding to phospholipids at acidic pH and to oxidized phospholipds at cytosolic pH. Plays a role in cell protection against oxidative stress by detoxifying peroxides and in phospholipid homeostasis. Exhibits acyl-CoA-dependent lysophospholipid acyltransferase which mediates the conversion of lysophosphatidylcholine (1-acyl-sn-glycero-3-phosphocholine or LPC) into phosphatidylcholine (1,2-diacyl-sn-glycero-3-phosphocholine or PC). Shows a clear preference for LPC as the lysophospholipid and for palmitoyl CoA as the fatty acyl substrate. The polypeptide is Peroxiredoxin-6 (Mesocricetus auratus (Golden hamster)).